A 220-amino-acid chain; its full sequence is Probable septum site-determining protein MinC (220 aa).

This sequence belongs to the MinC family. Interacts with MinD and FtsZ.

Its function is as follows. Cell division inhibitor that blocks the formation of polar Z ring septums. Rapidly oscillates between the poles of the cell to destabilize FtsZ filaments that have formed before they mature into polar Z rings. Prevents FtsZ polymerization. In Prochlorococcus marinus subsp. pastoris (strain CCMP1986 / NIES-2087 / MED4), this protein is Probable septum site-determining protein MinC.